A 115-amino-acid polypeptide reads, in one-letter code: NADH-ubiquinone oxidoreductase chain 3 (115 aa).

3 helical membrane-spanning segments follow: residues Phe4–Leu24, Phe55–Leu75, and Met87–Val107.

The protein belongs to the complex I subunit 3 family. Core subunit of respiratory chain NADH dehydrogenase (Complex I) which is composed of 45 different subunits. Interacts with TMEM186. Interacts with TMEM242.

It is found in the mitochondrion inner membrane. The enzyme catalyses a ubiquinone + NADH + 5 H(+)(in) = a ubiquinol + NAD(+) + 4 H(+)(out). Functionally, core subunit of the mitochondrial membrane respiratory chain NADH dehydrogenase (Complex I) which catalyzes electron transfer from NADH through the respiratory chain, using ubiquinone as an electron acceptor. Essential for the catalytic activity of complex I. This Osgoodomys banderanus (Michoacan deer mouse) protein is NADH-ubiquinone oxidoreductase chain 3.